The chain runs to 120 residues: Ribosome-binding factor A (120 aa).

It belongs to the RbfA family. As to quaternary structure, monomer. Binds 30S ribosomal subunits, but not 50S ribosomal subunits or 70S ribosomes.

The protein localises to the cytoplasm. Functionally, one of several proteins that assist in the late maturation steps of the functional core of the 30S ribosomal subunit. Associates with free 30S ribosomal subunits (but not with 30S subunits that are part of 70S ribosomes or polysomes). Required for efficient processing of 16S rRNA. May interact with the 5'-terminal helix region of 16S rRNA. This is Ribosome-binding factor A from Chlamydia caviae (strain ATCC VR-813 / DSM 19441 / 03DC25 / GPIC) (Chlamydophila caviae).